The following is a 306-amino-acid chain: Pantothenate kinase (306 aa).

ATP is bound at residue 90 to 97 (GSVAVGKS).

It belongs to the prokaryotic pantothenate kinase family.

It is found in the cytoplasm. It catalyses the reaction (R)-pantothenate + ATP = (R)-4'-phosphopantothenate + ADP + H(+). Its pathway is cofactor biosynthesis; coenzyme A biosynthesis; CoA from (R)-pantothenate: step 1/5. The chain is Pantothenate kinase from Listeria welshimeri serovar 6b (strain ATCC 35897 / DSM 20650 / CCUG 15529 / CIP 8149 / NCTC 11857 / SLCC 5334 / V8).